Consider the following 424-residue polypeptide: Phosphomethylpyrimidine synthase (424 aa).

Substrate-binding positions include Asn66, Met95, Tyr124, His163, 185–187 (SRG), 226–229 (DGMR), and Glu265. His269 is a binding site for Zn(2+). Phe292 is a substrate binding site. His333 is a Zn(2+) binding site. The [4Fe-4S] cluster site is built by Cys408, Cys411, and Cys415.

It belongs to the ThiC family. Requires [4Fe-4S] cluster as cofactor.

The enzyme catalyses 5-amino-1-(5-phospho-beta-D-ribosyl)imidazole + S-adenosyl-L-methionine = 4-amino-2-methyl-5-(phosphooxymethyl)pyrimidine + CO + 5'-deoxyadenosine + formate + L-methionine + 3 H(+). It participates in cofactor biosynthesis; thiamine diphosphate biosynthesis. Its function is as follows. Catalyzes the synthesis of the hydroxymethylpyrimidine phosphate (HMP-P) moiety of thiamine from aminoimidazole ribotide (AIR) in a radical S-adenosyl-L-methionine (SAM)-dependent reaction. This Thermotoga neapolitana (strain ATCC 49049 / DSM 4359 / NBRC 107923 / NS-E) protein is Phosphomethylpyrimidine synthase.